Reading from the N-terminus, the 263-residue chain is Endonuclease 8 (263 aa).

Residue proline 2 is the Schiff-base intermediate with DNA of the active site. The active-site Proton donor is the glutamate 3. The active-site Proton donor; for beta-elimination activity is the lysine 53. DNA is bound by residues glutamine 70, arginine 125, and asparagine 169. The FPG-type zinc-finger motif lies at 229–263 (KVFHRDGELCERCGGIIEKTTLSSRPFYWCPGCQH). Catalysis depends on arginine 253, which acts as the Proton donor; for delta-elimination activity.

The protein belongs to the FPG family. Requires Zn(2+) as cofactor.

The catalysed reaction is 2'-deoxyribonucleotide-(2'-deoxyribose 5'-phosphate)-2'-deoxyribonucleotide-DNA = a 3'-end 2'-deoxyribonucleotide-(2,3-dehydro-2,3-deoxyribose 5'-phosphate)-DNA + a 5'-end 5'-phospho-2'-deoxyribonucleoside-DNA + H(+). In terms of biological role, involved in base excision repair of DNA damaged by oxidation or by mutagenic agents. Acts as a DNA glycosylase that recognizes and removes damaged bases. Has a preference for oxidized pyrimidines, such as thymine glycol, 5,6-dihydrouracil and 5,6-dihydrothymine. Has AP (apurinic/apyrimidinic) lyase activity and introduces nicks in the DNA strand. Cleaves the DNA backbone by beta-delta elimination to generate a single-strand break at the site of the removed base with both 3'- and 5'-phosphates. The chain is Endonuclease 8 from Escherichia coli O157:H7.